Consider the following 302-residue polypeptide: Serine/threonine-protein phosphatase alpha-2 isoform (302 aa).

4 residues coordinate Mn(2+): aspartate 62, histidine 64, aspartate 90, and asparagine 122. Residue histidine 123 is the Proton donor of the active site. The Mn(2+) site is built by histidine 171 and histidine 246.

This sequence belongs to the PPP phosphatase family. PP-1 subfamily. Interacts with Nop17l. Interacts with uri; uri inhibits Pp1-87B phosphatase activity. Interacts with Rif1. It depends on Mn(2+) as a cofactor.

It localises to the cytoplasm. It carries out the reaction O-phospho-L-seryl-[protein] + H2O = L-seryl-[protein] + phosphate. The catalysed reaction is O-phospho-L-threonyl-[protein] + H2O = L-threonyl-[protein] + phosphate. In terms of biological role, is essential for the regulation of mitotic chromosomal segregation as well as regulation of chromatin condensation during interphase. In Drosophila melanogaster (Fruit fly), this protein is Serine/threonine-protein phosphatase alpha-2 isoform (Pp1-87B).